Consider the following 552-residue polypeptide: MPSARLQQQFIRLWQCCEGKSQDTTLNELAALLSCSRRHMRTLLNTMQDRGWLTWEAEVGRGKRSRLIFLYTGLALQQQRAEDLLEQDRIDQLVQLVGDKATVRQMLVSHLGRSFRQGRHILRVLYYRPLRNLLPGSALRRSETHIARQIFSSLTRINEANGELEADIAHHWQQISPLHWRFFLRPGVHFHHGRELEMDDVIASFKRINTLPLYSHIADIVSPTPWTLDIHLTQPDRWLPLLLGQVPAMILPREWETLSNFASHPIGTGPYAVIRNSTNQLKIQAFDDFFGYRALIDEVNVWVLPEIADEPAGGLMLKGPQGEEKEIESRLEEGCYYLLFDSRTHRGANQQVRDWVSYVLSPTNLVYFAEEQYQQLWFPAYGLLPRWHHARTIKSEKPAGLESLTLTFYQDHSEHRVIAGIMQQILASHQVTLEIKEISYDQWHEGEIESDIWLNSANFTLPLDFSLFAHLCEVPLLQHCIPIDWQADAARWRNGEMNLANWCQQLVASKAMVPLIHHWLIIQGQRSMRGLRMNTLGWFDFKSAWFAPPDPE.

One can recognise an HTH marR-type domain in the interval 1-116 (MPSARLQQQF…LVSHLGRSFR (116 aa)). Residues 26-49 (LNELAALLSCSRRHMRTLLNTMQD) constitute a DNA-binding region (H-T-H motif). Residues 163–492 (ELEADIAHHW…IDWQADAARW (330 aa)) form a solute-binding region.

Activates the small RNA gene sgrS under glucose-phosphate stress conditions as well as yfdZ. Represses its own transcription under both stress and non-stress conditions. Might act as a sensor of the intracellular accumulation of phosphoglucose by binding these molecules in its C-terminal solute-binding domain. This Shigella dysenteriae serotype 1 (strain Sd197) protein is HTH-type transcriptional regulator SgrR.